A 96-amino-acid polypeptide reads, in one-letter code: Aspartyl/glutamyl-tRNA(Asn/Gln) amidotransferase subunit C (96 aa).

This sequence belongs to the GatC family. As to quaternary structure, heterotrimer of A, B and C subunits.

The enzyme catalyses L-glutamyl-tRNA(Gln) + L-glutamine + ATP + H2O = L-glutaminyl-tRNA(Gln) + L-glutamate + ADP + phosphate + H(+). The catalysed reaction is L-aspartyl-tRNA(Asn) + L-glutamine + ATP + H2O = L-asparaginyl-tRNA(Asn) + L-glutamate + ADP + phosphate + 2 H(+). Functionally, allows the formation of correctly charged Asn-tRNA(Asn) or Gln-tRNA(Gln) through the transamidation of misacylated Asp-tRNA(Asn) or Glu-tRNA(Gln) in organisms which lack either or both of asparaginyl-tRNA or glutaminyl-tRNA synthetases. The reaction takes place in the presence of glutamine and ATP through an activated phospho-Asp-tRNA(Asn) or phospho-Glu-tRNA(Gln). This is Aspartyl/glutamyl-tRNA(Asn/Gln) amidotransferase subunit C from Wolinella succinogenes (strain ATCC 29543 / DSM 1740 / CCUG 13145 / JCM 31913 / LMG 7466 / NCTC 11488 / FDC 602W) (Vibrio succinogenes).